A 160-amino-acid polypeptide reads, in one-letter code: Cytochrome b6-f complex subunit 4 (160 aa).

3 helical membrane passes run 36–56 (LLYIFPVCIFGTIACTVGLSV), 95–115 (LLGVLLMAGVPVGLLTVPFIE), and 131–151 (TVFLLGTVVAIWLGIGAALPI).

This sequence belongs to the cytochrome b family. PetD subfamily. As to quaternary structure, the 4 large subunits of the cytochrome b6-f complex are cytochrome b6, subunit IV (17 kDa polypeptide, petD), cytochrome f and the Rieske protein, while the 4 small subunits are petG, petL, petM and petN. The complex functions as a dimer.

It localises to the plastid. Its subcellular location is the chloroplast thylakoid membrane. Component of the cytochrome b6-f complex, which mediates electron transfer between photosystem II (PSII) and photosystem I (PSI), cyclic electron flow around PSI, and state transitions. This Chaetosphaeridium globosum (Charophycean green alga) protein is Cytochrome b6-f complex subunit 4.